The primary structure comprises 609 residues: PTS system beta-glucoside-specific EIIBCA component (609 aa).

A PTS EIIB type-1 domain is found at 1–86 (MDYDKLSKDI…VRHSNLSDEK (86 aa)). The active-site Phosphocysteine intermediate; for EIIB activity is the Cys-26. The region spanning 103–459 (DVISGVFTPI…GSQQPAVHEG (357 aa)) is the PTS EIIC type-1 domain. Helical transmembrane passes span 112 to 132 (ILPA…AVTF), 141 to 161 (VHVI…LLLA), 174 to 194 (VAAA…LGAG), 202 to 222 (LPVT…SIWI), 246 to 266 (FTLL…GAIL), 281 to 301 (AGLV…MTGM), 321 to 341 (LLPA…AVFL), 351 to 371 (LALT…MYGV), 379 to 399 (FAAA…TGVA), and 412 to 432 (IPVF…IAFA). A PTS EIIA type-1 domain is found at 480–584 (DGVFSAGVMG…DVITPVIVTN (105 aa)). The active-site Tele-phosphohistidine intermediate; for EIIA activity is His-532.

The protein localises to the cell membrane. In terms of biological role, the phosphoenolpyruvate-dependent sugar phosphotransferase system (sugar PTS), a major carbohydrate active -transport system, catalyzes the phosphorylation of incoming sugar substrates concomitantly with their translocation across the cell membrane. This system is involved in beta-glucoside transport. This chain is PTS system beta-glucoside-specific EIIBCA component (bglP), found in Bacillus subtilis (strain 168).